Reading from the N-terminus, the 140-residue chain is Baculoviral IAP repeat-containing protein 5 (140 aa).

The BIR repeat unit spans residues 18-88; the sequence is RIATFKNWPF…KHSPGCAFLT (71 aa). K23 is modified (N6-acetyllysine). T34 carries the post-translational modification Phosphothreonine; by CDK1 and CDK15. Position 48 is a phosphothreonine (T48). Zn(2+) is bound by residues C57, C60, E76, H77, H80, and C84. N6-acetyllysine is present on residues K90, K110, K112, and K115. Basic and acidic residues predominate over residues 113–129; the sequence is IAKETNNKQKEFEETAK. The segment at 113-140 is disordered; sequence IAKETNNKQKEFEETAKTTRQSIEQLAA. T117 carries the phosphothreonine; by AURKB modification. K129 carries the N6-acetyllysine modification. The span at 130-140 shows a compositional bias: polar residues; sequence TTRQSIEQLAA.

The protein belongs to the IAP family. In terms of assembly, monomer or homodimer. Exists as a homodimer in the apo state and as a monomer in the CPC-bound state. The monomer protects cells against apoptosis more efficiently than the dimer. Only the dimeric form is capable of enhancing tubulin stability in cells. When phosphorylated, interacts with LAMTOR5/HBXIP; the resulting complex binds pro-CASP9, as well as active CASP9, but much less efficiently. Component of the chromosomal passenger complex (CPC) composed of at least BIRC5/survivin, CDCA8/borealin, INCENP, AURKB or AURKC; in the complex forms a triple-helix bundle-based subcomplex with INCENP and CDCA8. Interacts with JTB. Interacts (via BIR domain) with histone H3 phosphorylated at 'Thr-3' (H3pT3). Interacts with EVI5. Interacts with GTP-bound RAN in both the S and M phases of the cell cycle. Interacts with USP9X. Interacts with tubulin. Interacts with BIRC2/c-IAP1. The acetylated form at Lys-129 interacts with STAT3. The monomeric form deacetylated at Lys-129 interacts with XPO1/CRM1. The monomeric form interacts with XIAP/BIRC4. Both the dimeric and monomeric form can interact with DIABLO/SMAC. Interacts with BIRC6/bruce. Interacts with FBXL7; this interaction facilitates the polyubiquitination and subsequent proteasomal degradation of BIRC5 by the SCF(FBXL7) E3 ubiquitin-protein ligase complex. In terms of processing, ubiquitinated by the Cul9-RING ubiquitin-protein ligase complex, leading to its degradation. Ubiquitination is required for centrosomal targeting. Deubiquitinated by USP35 or USP38; leading to stabilization. Post-translationally, acetylation at Lys-129 results in its homodimerization, while deacetylation promotes the formation of monomers which heterodimerize with XPO1/CRM1 which facilitates its nuclear export. The acetylated form represses STAT3 transactivation. The dynamic equilibrium between its acetylation and deacetylation at Lys-129 determines its interaction with XPO1/CRM1, its subsequent subcellular localization, and its ability to inhibit STAT3 transactivation. In vitro phosphorylation at Thr-117 by AURKB prevents interaction with INCENP and localization to mitotic chromosomes. Phosphorylation at Thr-48 by CK2 is critical for its mitotic and anti-apoptotic activities. Phosphorylation at Thr-34 by CDK15 is critical for its anti-apoptotic activity.

It is found in the cytoplasm. Its subcellular location is the nucleus. The protein resides in the chromosome. The protein localises to the centromere. It localises to the cytoskeleton. It is found in the spindle. Its subcellular location is the kinetochore. The protein resides in the midbody. Its function is as follows. Multitasking protein that has dual roles in promoting cell proliferation and preventing apoptosis. Component of a chromosome passage protein complex (CPC) which is essential for chromosome alignment and segregation during mitosis and cytokinesis. Acts as an important regulator of the localization of this complex; directs CPC movement to different locations from the inner centromere during prometaphase to midbody during cytokinesis and participates in the organization of the center spindle by associating with polymerized microtubules. Involved in the recruitment of CPC to centromeres during early mitosis via association with histone H3 phosphorylated at 'Thr-3' (H3pT3) during mitosis. The complex with RAN plays a role in mitotic spindle formation by serving as a physical scaffold to help deliver the RAN effector molecule TPX2 to microtubules. May counteract a default induction of apoptosis in G2/M phase. The acetylated form represses STAT3 transactivation of target gene promoters. May play a role in neoplasia. Inhibitor of CASP3 and CASP7. Essential for the maintenance of mitochondrial integrity and function. This is Baculoviral IAP repeat-containing protein 5 (Birc5) from Mus musculus (Mouse).